The following is a 119-amino-acid chain: Large ribosomal subunit protein uL24 (119 aa).

Belongs to the universal ribosomal protein uL24 family. In terms of assembly, part of the 50S ribosomal subunit.

Its function is as follows. One of two assembly initiator proteins, it binds directly to the 5'-end of the 23S rRNA, where it nucleates assembly of the 50S subunit. In terms of biological role, located at the polypeptide exit tunnel on the outside of the subunit. In Saccharolobus solfataricus (strain ATCC 35092 / DSM 1617 / JCM 11322 / P2) (Sulfolobus solfataricus), this protein is Large ribosomal subunit protein uL24.